A 946-amino-acid chain; its full sequence is MAGSIGERREDFKVLNLLGKGSFACVYRAQSINTGIDVAIKMIDKKAMQKVGMVQRVRNEVEIHCQLKHPSILELYNYFEDSNYVYLILEMCHNGEMNRFLKNRKKPFSEDEARHFMHQIVTGMLYLHSHGILHRDLTLSNLLLSSDMNIKIADFGLATQLKMPNEKHFTMCGTPNYIAPEIATRSAHGLESDVWSLGCMLYTFLVGRPPFDTDTVKNTLNKIVLADYEMPDFVSREAKDLIFQLLRKNPADRLSLSSVLDHAFMTGFSNVQSKVMGAVEDSIDSGHATISTGFTGSSGVSISGRFQEKRILSGPSLPNKVNIFQFKDKHPAERSNGGSFHNTQRENNDFSEGNGRKTVACEDRPHSRYLRRAHSSDRSGTSQSQTYGKPSSFSERCHSVEMLAKPSNLKGYCTSSPPKSYGDIPQMFTDERSLERHTSPPVKEKTPSEFMCPAKQITPRSGDKCQAETVQQWFGAMQLNGKFKNTPDTSSVSNMGGDFYSQQTMQNGAPQYAWNDVKRKKDTDSSVESVLRGISKLPSGQHKAEKSQFGEQSKARVPQQAFGSSTLRSIISPLNAERLKPIRQKTKNAVVSILETGEVCMEFLKEQNSQERVKEVLRISCDGNLIYVYHPNEGKGFPLVERPPSPPENMRSYTFDSLPEKYWKKYQYAAKFIQLVRSKMPKVTYYTRYAKCMLMENGPNADFEVCFYDGAKIHKTPDLIRVIEKSGKSYTVEGSRLSTLSDQVRSYVNHANESHCVCLSLESAINTEEKKGENISLFPITFGRRPAITESPRTQLTVDSARERKDEQSSANRVLHSSATSPPQIPNINPSLISYEGSVFSATTAQPSPPTSNTLKTHAPDRAQVLKSVFVENVGWASQLNSGAVWVQFNDGSQLVVQPGVSSIIYTAPNGQITRHGENDKLPEYIKSKLQCLSSILMLFASSSSH.

The Protein kinase domain maps to 12–265 (FKVLNLLGKG…LSSVLDHAFM (254 aa)). ATP is bound by residues 18–26 (LGKGSFACV) and Lys41. The Proton acceptor role is filled by Asp136. Residues 330-395 (HPAERSNGGS…TYGKPSSFSE (66 aa)) form a disordered region. Residues 378-394 (RSGTSQSQTYGKPSSFS) show a composition bias toward polar residues. One can recognise a Cryptic POLO box 1 (CPB1) domain in the interval 566-679 (TLRSIISPLN…AKFIQLVRSK (114 aa)). The Cryptic POLO box 2 (CPB2) domain maps to 680–792 (MPKVTYYTRY…GRRPAITESP (113 aa)). The segment at 789–828 (TESPRTQLTVDSARERKDEQSSANRVLHSSATSPPQIPNI) is disordered. Positions 809–828 (SSANRVLHSSATSPPQIPNI) are enriched in polar residues. The 79-residue stretch at 864–942 (QVLKSVFVEN…LSSILMLFAS (79 aa)) folds into the POLO box domain.

It belongs to the protein kinase superfamily. Ser/Thr protein kinase family. CDC5/Polo subfamily. Homodimer. In terms of processing, ubiquitinated; leading to its degradation by the proteasome.

The protein localises to the cytoplasm. It localises to the cytoskeleton. It is found in the microtubule organizing center. Its subcellular location is the centrosome. The protein resides in the centriole. The enzyme catalyses L-seryl-[protein] + ATP = O-phospho-L-seryl-[protein] + ADP + H(+). It catalyses the reaction L-threonyl-[protein] + ATP = O-phospho-L-threonyl-[protein] + ADP + H(+). In terms of biological role, serine/threonine-protein kinase that plays a central role in centriole duplication. Able to trigger procentriole formation on the surface of the parental centriole cylinder, leading to the recruitment of centriole biogenesis proteins such as sass6, cpap, ccp110, cep135 and gamma-tubulin. When overexpressed, it is able to induce centrosome amplification through the simultaneous generation of multiple procentrioles adjoining each parental centriole during S phase. Its central role in centriole replication suggests a possible role in tumorigenesis, centrosome aberrations being frequently observed in tumors. Also involved in deuterosome-mediated centriole amplification in multiciliated that can generate more than 100 centrioles. In Xenopus tropicalis (Western clawed frog), this protein is Serine/threonine-protein kinase PLK4.